A 174-amino-acid chain; its full sequence is Ferritin, heavy subunit (174 aa).

Residues 7-156 (QNFHKDCEAA…DWVTNLRRLG (150 aa)) form the Ferritin-like diiron domain. Positions 24, 59, 62, 104, and 138 each coordinate Fe cation.

It belongs to the ferritin family. In terms of assembly, in liver, forms a heteromer consisting of middle and heavy subunits. The functional molecule forms a roughly spherical shell with a diameter of 12 nm and contains a central cavity into which the insoluble mineral iron core is deposited. As to expression, liver (at protein level).

It carries out the reaction 4 Fe(2+) + O2 + 4 H(+) = 4 Fe(3+) + 2 H2O. Stores iron in a soluble, non-toxic, readily available form. Important for iron homeostasis. Has ferroxidase activity. Iron is taken up in the ferrous form and deposited as ferric hydroxides after oxidation. Also plays a role in delivery of iron to cells. Mediates iron uptake in capsule cells of the developing kidney. Delivery to lysosomes is mediated by the cargo receptor NCOA4 for autophagic degradation and release of iron. This Trematomus bernacchii (Emerald rockcod) protein is Ferritin, heavy subunit.